Here is a 284-residue protein sequence, read N- to C-terminus: MSATNEVITSGSYIKHHLQNLTYGQFPDGHWRFAHTTSEAKEMGFWAFHLDTLSISFILGALFLIFFYKVGKKMTSDTPSGAQNFIESVIDFINDNVRGSFNSQNPMVAPLALTTFIWIVLMNTMDLVPVDWLPYVAQQIGVWLGADPHHVFFKMVPTADPNATLGMSIGIFILIIYYSIKEKGAGGFAAELTFHPFGKMMLPFNLFLEGVNLIAKPVSLALRLFGNMYAGEMIFILIALLPFWVQWSLSLPWAIFHILIVLLQAFIFMTLVIVYMDMAHQKKH.

5 helical membrane passes run 47 to 67, 108 to 128, 156 to 176, 233 to 253, and 254 to 274; these read AFHL…LIFF, VAPL…MDLV, VPTA…ILII, MIFI…SLPW, and AIFH…LVIV.

Belongs to the ATPase A chain family. In terms of assembly, F-type ATPases have 2 components, CF(1) - the catalytic core - and CF(0) - the membrane proton channel. CF(1) has five subunits: alpha(3), beta(3), gamma(1), delta(1), epsilon(1). CF(0) has three main subunits: a(1), b(2) and c(9-12). The alpha and beta chains form an alternating ring which encloses part of the gamma chain. CF(1) is attached to CF(0) by a central stalk formed by the gamma and epsilon chains, while a peripheral stalk is formed by the delta and b chains.

The protein localises to the cell inner membrane. Its function is as follows. Key component of the proton channel; it plays a direct role in the translocation of protons across the membrane. The chain is ATP synthase subunit a from Ruthia magnifica subsp. Calyptogena magnifica.